Here is a 255-residue protein sequence, read N- to C-terminus: DNA repair protein RecO (255 aa).

It belongs to the RecO family.

In terms of biological role, involved in DNA repair and RecF pathway recombination. In Listeria monocytogenes serotype 4b (strain CLIP80459), this protein is DNA repair protein RecO.